A 371-amino-acid polypeptide reads, in one-letter code: Trans-enoyl reductase calK (371 aa).

NADP(+) is bound at residue 51 to 54 (NDHK). A substrate-binding site is contributed by 145-152 (WSTISLAF). NADP(+)-binding positions include 181 to 184 (GTAS), 204 to 207 (SNQS), tyrosine 222, and 269 to 270 (LE). 289-293 (GFQVL) contacts substrate. 359–360 (VR) serves as a coordination point for NADP(+).

Belongs to the zinc-containing alcohol dehydrogenase family. Monomer.

The protein operates within secondary metabolite biosynthesis. Functionally, trans-enoyl reductase; part of the gene cluster that mediates the biosynthesis of calbistrin A and related compounds. Calbistrin A is a secondary metabolite with an interesting structure that was recently found to have bioactivity against leukemia cells. It consists of two polyketides linked by an ester bond: a bicyclic decalin containing polyketide and a linear 12 carbon dioic acid structure. The polyketide synthase calA is probably responsible for forming the decalin moiety. Because calA lacks a designated enoylreductase (ER) domain, the required activity is provided by the trans-enoyl reductase calK. Following release from the PKS, calF then probably catalyzes the oxidation and the subsequent Diels Alder cycloisomerization that lead to the formation of the decalin moiety. The decalin polyketide backbone includes two C-methyl groups, at C7 and C11 in backbone, of which the C7 position is probably methylated by the methyltransferase domain of calA. A candidate for adding the methyl group at C11, if not done by CalA, is the cluster methyltransferase calH. Several additional tailoring enzymes within the cluster could be involved in the modification of the decalin polyketide product. Those include the 3 cytochrome P450 monooxygenases CalE, CalG and CalL, of which one might be responsible for the introduction of the extra hydroxyl group attached to the backbone of the decalin moiety, at position C9 in the backbone, that allows for attachment of the linear moiety. One tailoring enzyme activity that is expected to be involved in biosynthesis of calbistrin is an acyltransferase for connecting the two polyketide synthase products, and which could be performed by the cluster acyltransferase calJ. The enzyme responsible for the biosynthesis of the linear moiety, probably a second PKS, has not been identified yet. The sequence is that of Trans-enoyl reductase calK from Penicillium decumbens.